A 771-amino-acid chain; its full sequence is MTTVVDAEVQLTVVSDAAGRMRVQATGFQFDAGRAVAIEDTVGKVAGVQAVHAYPRTASIVIWYSRAICDTAAILSAIIDAETVPAAAVPAYASRSASNRKAGVVQKIIDWSTRTLSGVRRDVAAQPSGETSDACCDGEDNEDREPEQLWQVAKLRRAAFSGVLLTASLVAAWAYPLWPVVLGLKALALAVGASTFVPSSLKRLAEGRVGVGTLMTIAALGAVALGELGEAATLAFLFSISEGLEEYATARTRRGLRALLSLVPDQATVLREGTETIVASTELHVGDQMIVKPGERLATDGIIRAGRTALDVSAITGESVPVEVGPGDEVFAGSINGLGVLQVGVTATAANNSLARIVHIVEAEQVRKGASQRLADCIARPLVPSIMIAAALIAGTGSVLGNPLVWIERALVVLVAAAPCALAIAVPVTVVASIGAASRLGVLIKGGAALETLGTIRAVALDKTGTLTANRPVVIDVATTNGATREEVLAVAAALEARSEHPLAVAVLAATQATTAASDVQAVPGAGLIGRLDGRVVRLGRPGWLDAAELADHVACMQQAGATAVLVERDQQLLGAIAVRDELRPEAAEVVAGLRTGGYQVTMLTGDNHATAAALAAQAGIEQVHAELRPEDKAHLVAQLRARQPTAMVGDGVNDAPALAAADLGIAMGAMGTDVAIETADVALMGQDLRHLPQALDHARRSRQIMVQNVGLSLSIITVLMPLALFGILGLAAVVLVHEFTEVIVIANGVRAGRIKPLAGPPKTPDRTIPG.

Residues 19 to 86 (GRMRVQATGF…AIIDAETVPA (68 aa)) form the HMA domain. Residues 72–92 (AAILSAIIDAETVPAAAVPAY) traverse the membrane as a helical segment. Positions 122–143 (DVAAQPSGETSDACCDGEDNED) are disordered. 5 consecutive transmembrane segments (helical) span residues 163–183 (VLLTASLVAAWAYPLWPVVLG), 209–229 (VGVGTLMTIAALGAVALGELG), 330–350 (VFAGSINGLGVLQVGVTATAA), 387–407 (MIAAALIAGTGSVLGNPLVWI), and 411–431 (LVVLVAAAPCALAIAVPVTVV). Catalysis depends on D462, which acts as the 4-aspartylphosphate intermediate. The Mg(2+) site is built by D651 and D655. 2 helical membrane passes run 657 to 677 (PALAAADLGIAMGAMGTDVAI) and 716 to 736 (IITVLMPLALFGILGLAAVVL).

This sequence belongs to the cation transport ATPase (P-type) (TC 3.A.3) family. Type IB subfamily.

The protein localises to the cell membrane. The enzyme catalyses ATP + H2O = ADP + phosphate + H(+). In Mycobacterium bovis (strain ATCC BAA-935 / AF2122/97), this protein is Probable cation-transporting ATPase G (ctpG).